The following is a 974-amino-acid chain: MAAQGEPGYLAAQSDPGSNSERSTDSPVPGSEDDLVAGATLHSPEWSEERFRVDRKKLEAMLQAAAEGKGRSGEDFFQKIMEETNTQIAWPSKLKIGAKSKKDPHIKVSGKKEDVKEAKEMIMSVLDTKSNRVTLKMDVSHTEHSHVIGKGGNNIKKVMEETGCHIHFPDSNRNNQAEKSNQVSIAGQPAGVESARVRIRELLPLVLMFELPIAGILQPVPDPNSPSIQHISQTYNISVSFKQRSRMYGATVIVRGSQNNTSAVKEGTAMLLEHLAGSLASAIPVSTQLDIAAQHHLFMMGRNGSNIKHIMQRTGAQIHFPDPSNPQKKSTVYLQGTIESVCLARQYLMGCLPLVLMFDMKEEIEVDPQFIAQLMEQLDVFISIKPKPKQPSKSVIVKSVERNALNMYEARKCLLGLESSGVTIATSPSPASCPAGLACPSLDILASAGLGLTGLGLLGPTTLSLNTSTTPNSLLNALNSSVSPLQSPSSGTPSPTLWAPPLANTSSATGFSAIPHLMIPSTAQATLTNILLSGVPTYGHTAPSPPPGLTPVDVHINSMQTEGKKISAALNGHAQSPDIKYGAISTSSLGEKVLSANHGDPSIQTSGSEQTSPKSSPTEGCNDAFVEVGMPRSPSHSGNAGDLKQMMCPSKVSCAKRQTVELLQGTKNSHLHSTDRLLSDPELSATESPLADKKAPGSERAAERAAAAQQNSERAHLAPRSSYVNMQAFDYEQKKLLATKAMLKKPVVTEVRTPTNTWSGLGFSKSMPAETIKELRRANHVSYKPTMTTTYEGSSMSLSRSNSREHLGGGSESDNWRDRNGIGPGSHSEFAASIGSPKRKQNKSTEHYLSSSNYMDCISSLTGSNGCNLNSSFKGSDLPELFSKLGLGKYTDVFQQQEIDLQTFLTLTDQDLKELGITTFGARRKMLLAISELNKNRRKLFESPNARTSFLEGGASGRLPRQYHSDIASVSGRW.

The disordered stretch occupies residues 1-50 (MAAQGEPGYLAAQSDPGSNSERSTDSPVPGSEDDLVAGATLHSPEWSEER). Phosphoserine is present on residues Ser-26, Ser-31, and Ser-43. KH domains follow at residues 132–199 (RVTL…RVRI) and 284–348 (PVST…RQYL). Lys-398 is modified (N6-acetyllysine). A phosphoserine mark is found at Ser-576, Ser-612, and Ser-679. Disordered stretches follow at residues 593–644 (VLSA…GDLK), 665–719 (GTKN…HLAP), and 783–846 (YKPT…KSTE). Residues 602–619 (SIQTSGSEQTSPKSSPTE) are compositionally biased toward polar residues. Basic and acidic residues predominate over residues 690-703 (LADKKAPGSERAAE). Residues 873–936 (FKGSDLPELF…LLAISELNKN (64 aa)) form the SAM domain.

Belongs to the BicC family. Interacts (via KH domains) with ANKS6 (via SAM domain) in an RNA-dependent manner. Interacts with ANKS3.

The protein resides in the cytoplasm. Its function is as follows. Putative RNA-binding protein. Acts as a negative regulator of Wnt signaling. May be involved in regulating gene expression during embryonic development. This Homo sapiens (Human) protein is Protein bicaudal C homolog 1 (BICC1).